The sequence spans 366 residues: tRNA(Met) cytidine acetate ligase (366 aa).

ATP contacts are provided by residues valine 7–leucine 20, glycine 96, asparagine 152, and arginine 175.

Belongs to the TmcAL family.

Its subcellular location is the cytoplasm. It catalyses the reaction cytidine(34) in elongator tRNA(Met) + acetate + ATP = N(4)-acetylcytidine(34) in elongator tRNA(Met) + AMP + diphosphate. Functionally, catalyzes the formation of N(4)-acetylcytidine (ac(4)C) at the wobble position of elongator tRNA(Met), using acetate and ATP as substrates. First activates an acetate ion to form acetyladenylate (Ac-AMP) and then transfers the acetyl group to tRNA to form ac(4)C34. This Streptococcus uberis (strain ATCC BAA-854 / 0140J) protein is tRNA(Met) cytidine acetate ligase.